Consider the following 267-residue polypeptide: 3-methyl-2-oxobutanoate hydroxymethyltransferase (267 aa).

Asp-46 and Asp-85 together coordinate Mg(2+). 3-methyl-2-oxobutanoate contacts are provided by residues 46 to 47 (DS), Asp-85, and Lys-115. Mg(2+) is bound at residue Glu-117. Glu-184 serves as the catalytic Proton acceptor.

Belongs to the PanB family. As to quaternary structure, homodecamer; pentamer of dimers. Mg(2+) serves as cofactor.

Its subcellular location is the cytoplasm. The catalysed reaction is 3-methyl-2-oxobutanoate + (6R)-5,10-methylene-5,6,7,8-tetrahydrofolate + H2O = 2-dehydropantoate + (6S)-5,6,7,8-tetrahydrofolate. The protein operates within cofactor biosynthesis; (R)-pantothenate biosynthesis; (R)-pantoate from 3-methyl-2-oxobutanoate: step 1/2. Catalyzes the reversible reaction in which hydroxymethyl group from 5,10-methylenetetrahydrofolate is transferred onto alpha-ketoisovalerate to form ketopantoate. This is 3-methyl-2-oxobutanoate hydroxymethyltransferase from Geobacter metallireducens (strain ATCC 53774 / DSM 7210 / GS-15).